Consider the following 1154-residue polypeptide: uncharacterized protein (1154 aa).

The signal sequence occupies residues 1–18 (MKRNIFIKLLISLLLLSS). Residue Cys19 is the site of N-palmitoyl cysteine attachment. Cys19 carries S-diacylglycerol cysteine lipidation. Helical transmembrane passes span 288–308 (ISVS…FLIG), 394–414 (LGFI…FLIF), 423–443 (ALIT…FMLF), and 458–478 (ISYA…SMII).

Belongs to the TrbL/VirB6 family.

Its subcellular location is the cell membrane. This is an uncharacterized protein from Rickettsia typhi (strain ATCC VR-144 / Wilmington).